Reading from the N-terminus, the 109-residue chain is Nucleoid-associated protein LJ_0424 (109 aa).

It belongs to the YbaB/EbfC family. In terms of assembly, homodimer.

The protein localises to the cytoplasm. It localises to the nucleoid. Functionally, binds to DNA and alters its conformation. May be involved in regulation of gene expression, nucleoid organization and DNA protection. This chain is Nucleoid-associated protein LJ_0424, found in Lactobacillus johnsonii (strain CNCM I-12250 / La1 / NCC 533).